We begin with the raw amino-acid sequence, 500 residues long: Centrosomal protein of 57 kDa (500 aa).

Low complexity predominate over residues 1–16; the sequence is MAAASVSAASDSQFSS. The tract at residues 1 to 59 is disordered; sequence MAAASVSAASDSQFSSVLAEPSRSNGNMVRHSSSPYVLYPPDKPFLNSDLRRSPNKPTF. A compositionally biased stretch (polar residues) spans 22–35; the sequence is SRSNGNMVRHSSSP. Phosphoserine is present on Ser53. A centrosome localization domain (CLD) region spans residues 58 to 239; it reads TFAYPESNSR…RAAELQSGLE (182 aa). Residues 63 to 242 adopt a coiled-coil conformation; that stretch reads ESNSRAIFSA…ELQSGLEANR (180 aa). Disordered regions lie at residues 256 to 275 and 432 to 478; these read STRKIKKKKSKPPEKKGSRT and QKKE…RKNL. Residues 278–491 form a mediates interaction with microtubules region; sequence GAQPHYRLCL…KDMQTIQNSL (214 aa). The stretch at 389 to 449 forms a coiled coil; sequence TVELKDNLEC…KKTLDEEGNS (61 aa). Basic and acidic residues-rich tracts occupy residues 432-444 and 461-475; these read QKKELKANKKTLD and SKKDLAKQRPGEKSR.

It belongs to the translokin family. Interacts with FGF2 and RAP80. Does not interact with FGF1 or FGF2 isoform 24 kDa. Homodimer and homooligomer. Interacts with microtubules. As to expression, ubiquitous (at protein level). Expressed in testis, predominantly in round spermatids. Low expression is detected in other tissues.

The protein localises to the nucleus. It localises to the cytoplasm. Its subcellular location is the cytoskeleton. It is found in the microtubule organizing center. The protein resides in the centrosome. In terms of biological role, centrosomal protein which may be required for microtubule attachment to centrosomes. May act by forming ring-like structures around microtubules. Mediates nuclear translocation and mitogenic activity of the internalized growth factor FGF2. This chain is Centrosomal protein of 57 kDa (Cep57), found in Mus musculus (Mouse).